We begin with the raw amino-acid sequence, 249 residues long: Enolase-phosphatase E1 (249 aa).

This sequence belongs to the HAD-like hydrolase superfamily. MasA/MtnC family. In terms of assembly, monomer. Mg(2+) serves as cofactor.

The catalysed reaction is 5-methylsulfanyl-2,3-dioxopentyl phosphate + H2O = 1,2-dihydroxy-5-(methylsulfanyl)pent-1-en-3-one + phosphate. It participates in amino-acid biosynthesis; L-methionine biosynthesis via salvage pathway; L-methionine from S-methyl-5-thio-alpha-D-ribose 1-phosphate: step 3/6. The protein operates within amino-acid biosynthesis; L-methionine biosynthesis via salvage pathway; L-methionine from S-methyl-5-thio-alpha-D-ribose 1-phosphate: step 4/6. Bifunctional enzyme that catalyzes the enolization of 2,3-diketo-5-methylthiopentyl-1-phosphate (DK-MTP-1-P) into the intermediate 2-hydroxy-3-keto-5-methylthiopentenyl-1-phosphate (HK-MTPenyl-1-P), which is then dephosphorylated to form the acireductone 1,2-dihydroxy-3-keto-5-methylthiopentene (DHK-MTPene). The chain is Enolase-phosphatase E1 from Pseudomonas aeruginosa (strain ATCC 15692 / DSM 22644 / CIP 104116 / JCM 14847 / LMG 12228 / 1C / PRS 101 / PAO1).